The sequence spans 103 residues: Large ribosomal subunit protein bL21 (103 aa).

Belongs to the bacterial ribosomal protein bL21 family. Part of the 50S ribosomal subunit. Contacts protein L20.

Functionally, this protein binds to 23S rRNA in the presence of protein L20. In Leptothrix cholodnii (strain ATCC 51168 / LMG 8142 / SP-6) (Leptothrix discophora (strain SP-6)), this protein is Large ribosomal subunit protein bL21.